We begin with the raw amino-acid sequence, 619 residues long: MRVLVWIAGLAPLAVAVPSSSYRVAVAARADNTSASVAPSQNVSGAAPPELVVYTLPCEDGNSTARTAEIRLKQATLLYGPSLLGNASYFPGGPLGDAISLRDQTVWEGAAVVQSLRAFTDAAKVAANIKQNGGLNSLDDFKVLYQDGWKGSVPQGIARGQSENYTSDLLFSMERLSVNPYILKRLHPTEDALPFQVDRATVKQLTKTSLKALHAAGRLFVADHSYQRNYTRLANRYSAACTALFYLDPRSNQFLPLAIKTNVGADLTYTPLDTDNNNWLLAKIMFNNNDLFHGQIFHVAYPHAIAEIVHLAALRTMSARHPVLALMERLMYQAYAVRPLGERVLFNKGGLFEQNFAYPQDMVYKFVGDSYPTTGRWRAGYLDTDVRARGLVDADYGPELPHFPFYEDGSRLVEVIRRFVRSFVDATYHESDEMVAKDAELQAWVAEANGPAGVEDFEPGPLDTRERLVEVLTHMAWLTGCAHHVLNQGEPVTASGVLPMHPTALYAPVPTSKANTTADLLGYLPSAQKSVDQVTLLARFNRPDVVPTNQTLRYMFAAPQLLLGNGEAYRRANQRFVRAMGRISDEVKARRFDDRGLSQGMPFIWQALDPGNIPFYLSV.

The first 16 residues, 1 to 16 (MRVLVWIAGLAPLAVA), serve as a signal peptide directing secretion. N-linked (GlcNAc...) asparagine glycans are attached at residues asparagine 32, asparagine 42, asparagine 62, asparagine 86, asparagine 164, and asparagine 229. Residues 55–619 (TLPCEDGNST…PGNIPFYLSV (565 aa)) enclose the Lipoxygenase domain. Mn(2+)-binding residues include histidine 298, histidine 303, histidine 483, and asparagine 487. Asparagine 515 and asparagine 549 each carry an N-linked (GlcNAc...) asparagine glycan. Valine 619 lines the Mn(2+) pocket.

It belongs to the lipoxygenase family. Manganese lipoxygenase subfamily. Mn(2+) serves as cofactor.

The protein resides in the secreted. The catalysed reaction is (9Z,12Z)-octadecadienoate + O2 = (9S)-hydroperoxy-(10E,12Z)-octadecadienoate. It carries out the reaction (9Z,12Z)-octadecadienoate + O2 = (11S)-hydroperoxy-(9Z,12Z)-octadecadienoate. The enzyme catalyses (9Z,12Z)-octadecadienoate + O2 = (13R)-hydroperoxy-(9Z,11E)-octadecadienoate. It catalyses the reaction (9Z,12Z,15Z)-octadecatrienoate + O2 = (9S)-hydroperoxy-(10E,12Z,15Z)-octadecatrienoate. The catalysed reaction is (9Z,12Z,15Z)-octadecatrienoate + O2 = (11R)-hydroperoxy-(9Z,12Z,15Z)-octadecatrienoate. It carries out the reaction (9Z,12Z,15Z)-octadecatrienoate + O2 = (13R)-hydroperoxy-(9Z,11E,15Z)-octadecatrienoate. The enzyme catalyses (9S)-hydroperoxy-(10E,12Z,15Z)-octadecatrienoate + O2 = (9S,16S)-dihydroperoxy-(10E,12Z,14E)-octadecatrienoate. Its function is as follows. Lipoxygenase that metabolizes linoleic and alpha-linolenic acids to 9S-, 11- and 13R-hydroperoxy fatty acids. At the end of lipoxygenation, the intermediate product 11S-HPODE from linoleic acid is then transformed into 9S-HPODE and 13R-HPODE as the final products. The intermediate product 11R-HPOTrE from alpha-linolenic acid is transformed into 9S-HPOTrE and 13R-HPOTrE as the final products. 9S-HPOTrE is further oxidized by the enzyme to 9S,16S-DiHPOTrE as the end product. The chain is Manganese lipoxygenase from Pyricularia oryzae (strain 70-15 / ATCC MYA-4617 / FGSC 8958) (Rice blast fungus).